The chain runs to 91 residues: Small ribosomal subunit protein uS19 (91 aa).

Belongs to the universal ribosomal protein uS19 family.

In terms of biological role, protein S19 forms a complex with S13 that binds strongly to the 16S ribosomal RNA. The chain is Small ribosomal subunit protein uS19 from Synechococcus sp. (strain CC9605).